The chain runs to 311 residues: Non-homologous end joining protein Ku (311 aa).

The 185-residue stretch at 26–210 (ISFGLVNIPI…NVNDKELQTA (185 aa)) folds into the Ku domain. The interval 269-311 (ASIDRTRRPNRETPAAAPAQAAEPKGAGDKKQKTTRKKASGTS) is disordered. The segment covering 282 to 293 (PAAAPAQAAEPK) has biased composition (low complexity). Residues 301–311 (KTTRKKASGTS) are compositionally biased toward basic residues.

The protein belongs to the prokaryotic Ku family. In terms of assembly, homodimer. Interacts with LigD.

The protein resides in the spore core. With LigD forms a non-homologous end joining (NHEJ) DNA repair enzyme, which repairs dsDNA breaks with reduced fidelity. Binds linear dsDNA with 5'- and 3'- overhangs but not closed circular dsDNA nor ssDNA. Recruits and stimulates the ligase activity of LigD. Probably involved in DNA repair during spore germination. This is Non-homologous end joining protein Ku from Bacillus subtilis (strain 168).